A 534-amino-acid chain; its full sequence is Cytochrome P450 714B1 (534 aa).

Methionine 1 is a topological domain (lumenal). A helical; Signal-anchor for type III membrane protein transmembrane segment spans residues 2-22 (VVVVAAAMAAASLCCGVAAYL). At 23–534 (YYVLWLAPER…RSKCDWAGFD (512 aa)) the chain is on the cytoplasmic side. Position 472 (cysteine 472) interacts with heme.

It belongs to the cytochrome P450 family. Requires heme as cofactor. As to expression, highly expressed in spikelet and uppermost internode. Detected in shoots, roots, leaves and anthers.

Its subcellular location is the membrane. In terms of biological role, catalyzes the 13-hydroxylation of gibberellins (GAs). Determines the ratio of GA4 and GA1. Converts GA12 into GA53. This Oryza sativa subsp. japonica (Rice) protein is Cytochrome P450 714B1 (CYP714B1).